Here is a 44-residue protein sequence, read N- to C-terminus: MLPDPEDPESKKATRRAGNLIICFLFIFFLFVTFIVPTLRHLLS.

At 1 to 16 the chain is on the intravirion side; that stretch reads MLPDPEDPESKKATRR. The helical; Signal-anchor for type II membrane protein transmembrane segment at 17–37 threads the bilayer; sequence AGNLIICFLFIFFLFVTFIVP. Residues 38–44 lie on the Virion surface side of the membrane; it reads TLRHLLS.

It belongs to the rubulavirus small hydrophobic protein family.

It localises to the virion membrane. The protein resides in the host cell membrane. Functionally, inhibits TNF-alpha signaling and seems to block apoptosis in host infected cells. In Parainfluenza virus 5 (strain W3) (PIV5), this protein is Small hydrophobic protein (SH).